The following is a 305-amino-acid chain: Homoserine kinase (305 aa).

Position 93-103 (93-103 (PLSRGLGSSAT)) interacts with ATP.

Belongs to the GHMP kinase family. Homoserine kinase subfamily.

Its subcellular location is the cytoplasm. It catalyses the reaction L-homoserine + ATP = O-phospho-L-homoserine + ADP + H(+). The protein operates within amino-acid biosynthesis; L-threonine biosynthesis; L-threonine from L-aspartate: step 4/5. Its function is as follows. Catalyzes the ATP-dependent phosphorylation of L-homoserine to L-homoserine phosphate. In Picosynechococcus sp. (strain ATCC 27264 / PCC 7002 / PR-6) (Agmenellum quadruplicatum), this protein is Homoserine kinase.